Here is a 182-residue protein sequence, read N- to C-terminus: CASP-like protein 2B1 (182 aa).

Over 1-12 (MKLIDRRMRLTE) the chain is Cytoplasmic. The helical transmembrane segment at 13–31 (LLLRCSISVFALLALILVV) threads the bilayer. Over 32–52 (TDTEVKLIFTIKKTAKYTDMK) the chain is Extracellular. The helical transmembrane segment at 53-73 (AVVFLVVANGIAAVYSLLQSV) threads the bilayer. Residues 74–89 (RCVVGTMKGKVLFSKP) are Cytoplasmic-facing. The chain crosses the membrane as a helical span at residues 90 to 110 (LAWAFFSGDQAMAYLNVAAIA). Residues 111 to 141 (ATAESGVIAREGEEDLQWMRVCTMYGKFCNQ) are Extracellular-facing. The helical transmembrane segment at 142–162 (MAIGVSSALLASIAMVFVSCI) threads the bilayer. Over 163–182 (SAFSLFRLYGATKDRRTTPW) the chain is Cytoplasmic.

Belongs to the Casparian strip membrane proteins (CASP) family. Homodimer and heterodimers.

The protein resides in the cell membrane. In Arabidopsis thaliana (Mouse-ear cress), this protein is CASP-like protein 2B1.